Consider the following 1252-residue polypeptide: DNA-directed RNA polymerase subunit beta (1252 aa).

This sequence belongs to the RNA polymerase beta chain family. In terms of assembly, the RNAP catalytic core consists of 2 alpha, 1 beta, 1 beta' and 1 omega subunit. When a sigma factor is associated with the core the holoenzyme is formed, which can initiate transcription.

It carries out the reaction RNA(n) + a ribonucleoside 5'-triphosphate = RNA(n+1) + diphosphate. Functionally, DNA-dependent RNA polymerase catalyzes the transcription of DNA into RNA using the four ribonucleoside triphosphates as substrates. The protein is DNA-directed RNA polymerase subunit beta of Chlamydia trachomatis serovar L2 (strain ATCC VR-902B / DSM 19102 / 434/Bu).